A 123-amino-acid chain; its full sequence is UPF0102 protein Maqu_2464 (123 aa).

This sequence belongs to the UPF0102 family.

The sequence is that of UPF0102 protein Maqu_2464 from Marinobacter nauticus (strain ATCC 700491 / DSM 11845 / VT8) (Marinobacter aquaeolei).